The sequence spans 424 residues: Glutamyl-tRNA reductase (424 aa).

Substrate contacts are provided by residues 49–52, Ser108, 113–115, and Gln119; these read TCNR and EPQ. The Nucleophile role is filled by Cys50. An NADP(+)-binding site is contributed by 188–193; sequence GAGETI.

This sequence belongs to the glutamyl-tRNA reductase family. In terms of assembly, homodimer.

It carries out the reaction (S)-4-amino-5-oxopentanoate + tRNA(Glu) + NADP(+) = L-glutamyl-tRNA(Glu) + NADPH + H(+). The protein operates within porphyrin-containing compound metabolism; protoporphyrin-IX biosynthesis; 5-aminolevulinate from L-glutamyl-tRNA(Glu): step 1/2. Functionally, catalyzes the NADPH-dependent reduction of glutamyl-tRNA(Glu) to glutamate 1-semialdehyde (GSA). The protein is Glutamyl-tRNA reductase of Hahella chejuensis (strain KCTC 2396).